Reading from the N-terminus, the 660-residue chain is Bifunctional polymyxin resistance protein ArnA (660 aa).

The formyltransferase ArnAFT stretch occupies residues 1–304 (MKAVVFAYHD…TLGLVEGSRL (304 aa)). His104 acts as the Proton donor; for formyltransferase activity in catalysis. (6R)-10-formyltetrahydrofolate-binding positions include Arg114 and 136 to 140 (VAKAD). The segment at 314 to 660 (RRTRVLILGV…RTVDIVEKSS (347 aa)) is dehydrogenase ArnADH. NAD(+) contacts are provided by residues Asp347 and 368-369 (DI). UDP-alpha-D-glucuronate is bound by residues Ala393, Tyr398, and 432-433 (TS). Glu434 functions as the Proton acceptor; for decarboxylase activity in the catalytic mechanism. Residues Arg460, Asn492, 526–535 (KLIDGGKQKR), and Tyr613 contribute to the UDP-alpha-D-glucuronate site. Arg619 functions as the Proton donor; for decarboxylase activity in the catalytic mechanism.

This sequence in the N-terminal section; belongs to the Fmt family. UDP-L-Ara4N formyltransferase subfamily. It in the C-terminal section; belongs to the NAD(P)-dependent epimerase/dehydratase family. UDP-glucuronic acid decarboxylase subfamily. In terms of assembly, homohexamer, formed by a dimer of trimers.

It carries out the reaction UDP-alpha-D-glucuronate + NAD(+) = UDP-beta-L-threo-pentopyranos-4-ulose + CO2 + NADH. It catalyses the reaction UDP-4-amino-4-deoxy-beta-L-arabinose + (6R)-10-formyltetrahydrofolate = UDP-4-deoxy-4-formamido-beta-L-arabinose + (6S)-5,6,7,8-tetrahydrofolate + H(+). Its pathway is nucleotide-sugar biosynthesis; UDP-4-deoxy-4-formamido-beta-L-arabinose biosynthesis; UDP-4-deoxy-4-formamido-beta-L-arabinose from UDP-alpha-D-glucuronate: step 1/3. It functions in the pathway nucleotide-sugar biosynthesis; UDP-4-deoxy-4-formamido-beta-L-arabinose biosynthesis; UDP-4-deoxy-4-formamido-beta-L-arabinose from UDP-alpha-D-glucuronate: step 3/3. It participates in bacterial outer membrane biogenesis; lipopolysaccharide biosynthesis. In terms of biological role, bifunctional enzyme that catalyzes the oxidative decarboxylation of UDP-glucuronic acid (UDP-GlcUA) to UDP-4-keto-arabinose (UDP-Ara4O) and the addition of a formyl group to UDP-4-amino-4-deoxy-L-arabinose (UDP-L-Ara4N) to form UDP-L-4-formamido-arabinose (UDP-L-Ara4FN). The modified arabinose is attached to lipid A and is required for resistance to polymyxin and cationic antimicrobial peptides. This chain is Bifunctional polymyxin resistance protein ArnA, found in Escherichia fergusonii (strain ATCC 35469 / DSM 13698 / CCUG 18766 / IAM 14443 / JCM 21226 / LMG 7866 / NBRC 102419 / NCTC 12128 / CDC 0568-73).